The sequence spans 532 residues: Putative sodium-dependent excitatory amino acid transporter glt-3 (532 aa).

Residues 1–5 (MGMKK) lie on the Cytoplasmic side of the membrane. Helical transmembrane passes span 6–26 (DLLL…GFVI), 46–66 (FMQI…ISAL), and 83–103 (IYYM…VSSI). Over 104 to 181 (HPGDPELIHE…SEVLHKQTLT (78 aa)) the chain is Extracellular. 2 N-linked (GlcNAc...) asparagine glycosylation sites follow: asparagine 164 and asparagine 169. The next 5 helical transmembrane spans lie at 182 to 202 (YTNE…GIIL), 222 to 242 (IIMR…LSLV), 264 to 284 (VTVI…LYFL), 352 to 372 (AVAV…MDLV), and 383 to 402 (IGSG…LTTV).

It belongs to the dicarboxylate/amino acid:cation symporter (DAACS) (TC 2.A.23) family.

The protein localises to the membrane. This is Putative sodium-dependent excitatory amino acid transporter glt-3 (glt-3) from Caenorhabditis elegans.